The following is a 398-amino-acid chain: MKIHEYQGKQLFARYGVPVPKGEPAFQASEVAPIADRLIAQTGNPVVVVKAQIHAGGRGKGGGVKVAKGGSAEATALAEKILGMQLVTKQTGPEGQKVRRLYIEQGLDIARELYFAMLVDRERRRIAVIASTEGGMDIEEVAHSTPEKIYKLFIDPVLGLAPYQGRQLAIALGLTAKETQRQFLKLVASLYACFTAEDCSLLEINPLVVTGAGDVFALDAKVSFDDNAEFRHADWNGMRDVDEEDPVELQAKRAGLSYVSLDGDIGCLVNGAGLAMATMDIILHYGGKPANFLDVGGGASQEQVKTAFQIILRSERVRGIFVNIFGGIMRCDVVAAGVIAAAKELGLKVPLVVRLEGTNVEAGRKLLDESGLTIQSASSMADGAQKIVAATRGGKAGA.

The ATP-grasp domain maps to 9–250 (KQLFARYGVP…VDEEDPVELQ (242 aa)). ATP contacts are provided by residues Lys-50, 57-59 (GRG), Glu-104, Leu-107, and Glu-112. Asn-205 and Asp-219 together coordinate Mg(2+). Residues Asn-270 and 327–329 (GIM) each bind substrate.

It belongs to the succinate/malate CoA ligase beta subunit family. In terms of assembly, heterotetramer of two alpha and two beta subunits. Mg(2+) is required as a cofactor.

The enzyme catalyses succinate + ATP + CoA = succinyl-CoA + ADP + phosphate. The catalysed reaction is GTP + succinate + CoA = succinyl-CoA + GDP + phosphate. It participates in carbohydrate metabolism; tricarboxylic acid cycle; succinate from succinyl-CoA (ligase route): step 1/1. Its function is as follows. Succinyl-CoA synthetase functions in the citric acid cycle (TCA), coupling the hydrolysis of succinyl-CoA to the synthesis of either ATP or GTP and thus represents the only step of substrate-level phosphorylation in the TCA. The beta subunit provides nucleotide specificity of the enzyme and binds the substrate succinate, while the binding sites for coenzyme A and phosphate are found in the alpha subunit. The sequence is that of Succinate--CoA ligase [ADP-forming] subunit beta from Sorangium cellulosum (strain So ce56) (Polyangium cellulosum (strain So ce56)).